We begin with the raw amino-acid sequence, 197 residues long: Putative phosphopantothenoylcysteine decarboxylase (197 aa).

Residues Phe52 and 102–105 contribute to the FMN site; that span reads SANT. Substrate is bound at residue Asn139. The active-site Proton donor is the Cys174.

This sequence belongs to the HFCD (homooligomeric flavin containing Cys decarboxylase) superfamily. As to quaternary structure, homotrimer. FMN is required as a cofactor.

It catalyses the reaction N-[(R)-4-phosphopantothenoyl]-L-cysteine + H(+) = (R)-4'-phosphopantetheine + CO2. The protein operates within cofactor biosynthesis; coenzyme A biosynthesis; CoA from (R)-pantothenate: step 3/5. Functionally, necessary for the biosynthesis of coenzyme A. Catalyzes the decarboxylation of 4-phosphopantothenoylcysteine to form 4'-phosphopantotheine. The protein is Putative phosphopantothenoylcysteine decarboxylase (ppcdc) of Dictyostelium discoideum (Social amoeba).